Here is a 110-residue protein sequence, read N- to C-terminus: Large ribosomal subunit protein uL22 (110 aa).

It belongs to the universal ribosomal protein uL22 family. Part of the 50S ribosomal subunit.

This protein binds specifically to 23S rRNA; its binding is stimulated by other ribosomal proteins, e.g. L4, L17, and L20. It is important during the early stages of 50S assembly. It makes multiple contacts with different domains of the 23S rRNA in the assembled 50S subunit and ribosome. Its function is as follows. The globular domain of the protein is located near the polypeptide exit tunnel on the outside of the subunit, while an extended beta-hairpin is found that lines the wall of the exit tunnel in the center of the 70S ribosome. In Vesicomyosocius okutanii subsp. Calyptogena okutanii (strain HA), this protein is Large ribosomal subunit protein uL22.